We begin with the raw amino-acid sequence, 258 residues long: Histidine/lysine/arginine/ornithine transport ATP-binding protein HisP (258 aa).

The ABC transporter domain maps to 7-253; it reads LHVIDLHKRY…PQSPRLQQFL (247 aa). ATP-binding residues include Ser41, Gly42, Gly44, Lys45, Ser46, and Thr47.

Belongs to the ABC transporter superfamily. As to quaternary structure, the HisPMQJ complex is composed of two ATP-binding proteins (HisP), two transmembrane proteins (HisM and HisQ) and a solute-binding protein (HisJ). The HisPMQ-ArgT complex is composed of two ATP-binding proteins (HisP), two transmembrane proteins (HisM and HisQ) and a solute-binding protein (ArgT).

The protein localises to the cell inner membrane. It carries out the reaction a polar amino acid(out) + ATP + H2O = a polar amino acid(in) + ADP + phosphate + H(+). The catalysed reaction is L-histidine(out) + ATP + H2O = L-histidine(in) + ADP + phosphate + H(+). The enzyme catalyses L-lysine(out) + ATP + H2O = L-lysine(in) + ADP + phosphate + H(+). It catalyses the reaction L-arginine(out) + ATP + H2O = L-arginine(in) + ADP + phosphate + H(+). It carries out the reaction L-ornithine(out) + ATP + H2O = L-ornithine(in) + ADP + phosphate + H(+). Its activity is regulated as follows. Isolated, soluble HisP has a very low ATPase activity. ATPase activity is slightly increased in the presence of HisM and HisQ, and strongly increased when HisJ is also present. Its function is as follows. Part of the ABC transporter complex HisPMQJ involved in histidine transport. Is also part of the ABC transporter complex HisPMQ-ArgT involved in lysine/arginine/ornithine transport. Shows ATPase activity. Responsible for energy coupling to the transport system. This is Histidine/lysine/arginine/ornithine transport ATP-binding protein HisP from Salmonella typhimurium (strain LT2 / SGSC1412 / ATCC 700720).